A 1197-amino-acid polypeptide reads, in one-letter code: Neural cell adhesion molecule L1.1 (1197 aa).

5 Ig-like C2-type domains span residues 1 to 58 (EFRQ…TAVS), 69 to 160 (PSLA…EPMS), 165 to 263 (PSNS…YTVT), 268 to 355 (PYWT…THVH), and 360 to 442 (PAQI…KSIS). Residues 1–1054 (EFRQRDPSPS…SPRNFATEGW (1054 aa)) lie on the Extracellular side of the membrane. Cysteine 92 and cysteine 143 form a disulfide bridge. 8 N-linked (GlcNAc...) asparagine glycosylation sites follow: asparagine 135, asparagine 149, asparagine 221, asparagine 298, asparagine 414, asparagine 421, asparagine 438, and asparagine 449. 3 disulfide bridges follow: cysteine 199/cysteine 247, cysteine 289/cysteine 339, and cysteine 383/cysteine 432. The Ig-like C2-type 6 domain occupies 451–541 (TKIVGPPQNL…DSDTASGYIT (91 aa)). A disulfide bridge links cysteine 472 with cysteine 525. Fibronectin type-III domains follow at residues 548–643 (PPQS…TPAA), 645–742 (PDTN…SGED), 747–852 (APSA…TPEG), 853–952 (APGP…LLDG), and 953–1048 (EPPS…SPRN). The span at 630–640 (APTESSLSYST) shows a compositional bias: polar residues. Residues 630 to 655 (APTESSLSYSTPAAKPDTNPENVMTL) form a disordered region. Residue asparagine 708 is glycosylated (N-linked (GlcNAc...) asparagine). N-linked (GlcNAc...) asparagine glycosylation is found at asparagine 959, asparagine 968, asparagine 1002, and asparagine 1027. A helical transmembrane segment spans residues 1055–1075 (FIGLISALVLLLLVLLLLCYI). Topologically, residues 1076–1197 (KKSKGGKYSV…TSVTGILGPN (122 aa)) are cytoplasmic. 2 disordered regions span residues 1115-1135 (MEKC…SNDS) and 1154-1197 (IGQY…LGPN).

Belongs to the immunoglobulin superfamily. L1/neurofascin/NgCAM family. Expressed in postmitotic neurons in 16-36 hours embryos, including those in the brain, cranial ganglia and otic and olfactory placodes, and in all classes of spinal neurons.

The protein resides in the cell membrane. It localises to the cell projection. The protein localises to the growth cone. Functionally, cell adhesion molecule with an important role in the development of the nervous system. Involved in neuron-neuron adhesion, neurite fasciculation, outgrowth of neurites, etc. Binds to axonin on neurons. This is Neural cell adhesion molecule L1.1 (nadl1.1) from Danio rerio (Zebrafish).